The primary structure comprises 300 residues: U6 snRNA methylphosphate capping enzyme Amus (300 aa).

Over residues 1–12 (MDLENNNNTPLT) the composition is skewed to polar residues. Disordered regions lie at residues 1 to 21 (MDLE…KCAK) and 34 to 68 (VESK…GKPM). Positions 34–44 (VESKRLKKEES) are enriched in basic and acidic residues. A Bin3-type SAM domain is found at 95 to 300 (DIRLDVLGTQ…KRPIQIFTKS (206 aa)). S-adenosyl-L-methionine contacts are provided by Asn-119 and Asp-140.

This sequence belongs to the methyltransferase superfamily.

It is found in the nucleus. Functionally, probable S-adenosyl-L-methionine-dependent methyltransferase that binds and stabilizes U6 snRNA, probably by adding a methylphosphate cap at its 5'-end. Required for U6 stability, but not stability of 7SK snRNAs, other miRNAs or tRNAs. U6 stabilization is required for efficient pre-mRNA splicing. Essential for organismal and germline development. The polypeptide is U6 snRNA methylphosphate capping enzyme Amus (Drosophila melanogaster (Fruit fly)).